The chain runs to 448 residues: Bifunctional F420 biosynthesis protein FbiB (448 aa).

Residues 1–244 (MTGPEHGSAS…PGANDLFWLG (244 aa)) are coenzyme F420:L-glutamate ligase. GTP-binding positions include 20-23 (LPEF), Ser-50, and Lys-55. Position 109 (Asp-109) interacts with a divalent metal cation. Position 112 (Asn-112) interacts with GTP. Positions 150 and 151 each coordinate a divalent metal cation. Residues 245-448 (TAEALELGRQ…VPAADLLILK (204 aa)) form a dehydro-coenzyme F420-0 reductase region. FMN is bound by residues 260–264 (RRSVR) and Ala-288. A coenzyme F420-(gamma-Glu)n-binding site is contributed by Asp-320. FMN-binding residues include Gly-399 and Arg-436.

In the N-terminal section; belongs to the CofE family. It depends on Mg(2+) as a cofactor. The cofactor is Mn(2+). Requires K(+) as cofactor.

It catalyses the reaction oxidized coenzyme F420-0 + GTP + L-glutamate = oxidized coenzyme F420-1 + GDP + phosphate + H(+). The enzyme catalyses oxidized coenzyme F420-1 + GTP + L-glutamate = oxidized coenzyme F420-2 + GDP + phosphate + H(+). The catalysed reaction is oxidized coenzyme F420-(gamma-L-Glu)(n) + GTP + L-glutamate = oxidized coenzyme F420-(gamma-L-Glu)(n+1) + GDP + phosphate + H(+). It carries out the reaction oxidized coenzyme F420-0 + FMN + H(+) = dehydro coenzyme F420-0 + FMNH2. The protein operates within cofactor biosynthesis; coenzyme F420 biosynthesis. Bifunctional enzyme that catalyzes the GTP-dependent successive addition of multiple gamma-linked L-glutamates to the L-lactyl phosphodiester of 7,8-didemethyl-8-hydroxy-5-deazariboflavin (F420-0) to form polyglutamated F420 derivatives, and the FMNH2-dependent reduction of dehydro-F420-0 to form F420-0. This chain is Bifunctional F420 biosynthesis protein FbiB, found in Mycobacterium tuberculosis (strain ATCC 25177 / H37Ra).